A 304-amino-acid chain; its full sequence is Bifunctional protein FolD (304 aa).

Residues 167–169 (GRS), S192, and I233 each bind NADP(+).

Belongs to the tetrahydrofolate dehydrogenase/cyclohydrolase family. As to quaternary structure, homodimer.

The enzyme catalyses (6R)-5,10-methylene-5,6,7,8-tetrahydrofolate + NADP(+) = (6R)-5,10-methenyltetrahydrofolate + NADPH. It carries out the reaction (6R)-5,10-methenyltetrahydrofolate + H2O = (6R)-10-formyltetrahydrofolate + H(+). It participates in one-carbon metabolism; tetrahydrofolate interconversion. Catalyzes the oxidation of 5,10-methylenetetrahydrofolate to 5,10-methenyltetrahydrofolate and then the hydrolysis of 5,10-methenyltetrahydrofolate to 10-formyltetrahydrofolate. The polypeptide is Bifunctional protein FolD (Rhodospirillum centenum (strain ATCC 51521 / SW)).